The primary structure comprises 488 residues: Histone deacetylase 2 (488 aa).

Positions 9–322 (KKKVCYYYDG…WTYETAVALD (314 aa)) are histone deacetylase. G28 and K32 together coordinate 1D-myo-inositol 1,4,5,6-tetrakisphosphate. The residue at position 75 (K75) is an N6-acetyllysine; alternate. K75 participates in a covalent cross-link: Glycyl lysine isopeptide (Lys-Gly) (interchain with G-Cter in SUMO2); alternate. H142 is a catalytic residue. Positions 175, 177, 179, 188, 191, 194, 198, and 199 each coordinate Ca(2+). Residues D177 and H179 each contribute to the Zn(2+) site. Position 221 is an N6-acetyllysine (K221). Y223 contacts Ca(2+). C262 bears the S-nitrosocysteine mark. D265 is a binding site for Zn(2+). Position 271 (R271) interacts with 1D-myo-inositol 1,4,5,6-tetrakisphosphate. An S-nitrosocysteine modification is found at C274. Residues 389–488 (AVHEDSGDED…GAKSEQLSNP (100 aa)) form a disordered region. Phosphoserine is present on residues S394, S407, S422, and S424. The span at 402–417 (PDKRISIRASDKRIAC) shows a compositional bias: basic and acidic residues. Over residues 418 to 428 (DEEFSDSEDEG) the composition is skewed to acidic residues. Positions 429 to 481 (EGGRRNVADHKKGAKKARIEEDKKETEDKKTDVKEEDKSKDNSGEKTDPKGAK) are enriched in basic and acidic residues. Residues K439, K452, K458, K462, K478, and K481 each participate in a glycyl lysine isopeptide (Lys-Gly) (interchain with G-Cter in SUMO2) cross-link.

This sequence belongs to the histone deacetylase family. HD type 1 subfamily. In terms of assembly, part of the core histone deacetylase (HDAC) complex composed of HDAC1, HDAC2, RBBP4 and RBBP7, the core complex associates with SIN3, SAP18 and SAP30 to form the SIN3 HDAC complex. Component of the nucleosome remodeling and deacetylase (NuRD) repressor complex, composed of core proteins MTA1, MTA2, MTA3, RBBP4, RBBP7, HDAC1, HDAC2, MBD2, MBD3, and peripherally associated proteins CDK2AP1, CDK2AP2, GATAD2A, GATAD2B, CHD3, CHD4 and CHD5. The exact stoichiometry of the NuRD complex is unknown, and some subunits such as MBD2 and MBD3, GATAD2A and GATAD2B, and CHD3, CHD4 and CHD5 define mutually exclusive NuRD complexes. Component of a RCOR/GFI/KDM1A/HDAC complex. Component of a BHC histone deacetylase complex that contains HDAC1, HDAC2, HMG20B, KDM1A, RCOR1 and PHF21A. The BHC complex may also contain ZMYM2, ZNF217, ZMYM3, GSE1 and GTF2I. Part of a complex containing the core histones H2A, H2B, H3 and H4, DEK and unphosphorylated DAXX. Part of a complex containing ATR and CHD4. Forms a heterologous complex at least with YY1. Interacts in the late S-phase of DNA-replication with DNMT1 in the other transcriptional repressor complex composed of DNMT1, DMAP1, PCNA, CAF1. Component of a mSin3A corepressor complex that contains SIN3A, SAP130, SUDS3, ARID4B, HDAC1 and HDAC2. Part of a complex composed of TRIM28, HDAC1, HDAC2 and EHMT2. Part of a complex containing at least CDYL, MIER1, MIER2, HDAC1 and HDAC2. Component of a histone deacetylase complex containing DNTTIP1, ZNF541, HDAC1 and HDAC2. Forms a complex comprising APPL1, RUVBL2, APPL2, CTNNB1 and HDAC1. Interacts directly with GFI1. Interacts directly with GFI1B. Interacts with APEX1; the interaction is not dependent on the acetylated status of APEX1. Interacts with ATR. Interacts with BCL6 (non-acetylated form). Interacts with BEND3. Interacts with CBFA2T3. Interacts with CDK2AP1. Interacts with CHD4. Interacts with CHD5. Interacts with CHFR. Interacts with CRY1. Interacts with DNMT1. Interacts with GATAD2A. Interacts with HCFC1. Interacts with HDAC7. Interacts with HDAC10. Interacts with INSM1. Interacts with KDM4A. Interacts with MACROH2A1 (via the non-histone region). Interacts with MBD3L2. Interacts with MTA1, with a preference for sumoylated MTA1. Interacts with NACC2. Interacts with NRIP1. Interacts with PELP1. Interacts with PIMREG. Interacts with PRDM6. Interacts with PWWP2B Interacts with SAP30. Interacts with SAP30L. Interacts with SETDB1. Interacts with SIX3. Interacts with SMARCAD1. Interacts with SNW1. Interacts with SPHK2. Interacts with SPEN/MINT. Interacts (CK2 phosphorylated form) with SP3. Interacts with SUV39H1. Interacts with TSHZ3 (via its N-terminus). Interacts with ZMYND8. Interacts with ZNF431. Interacts with ZNF263; recruited to the SIX3 promoter along with other proteins involved in chromatin modification and transcriptional corepression where it contributes to transcriptional repression. Identified in a complex with HDAC1, KCTD19, DNTTIP1 and ZNF541. Component of the SIN3B complex, which includes SIN3B, HDAC2, PHF12 and MORF4L1; interacts directly with all subunits. Zn(2+) serves as cofactor. Requires Ca(2+) as cofactor. S-nitrosylated by GAPDH. In neurons, S-nitrosylation at Cys-262 and Cys-274 does not affect enzyme activity, but induces HDAC2 release from chromatin. This in turn increases acetylation of histones surrounding neurotrophin-dependent gene promoters and promotes their transcription. In embryonic cortical neurons, S-Nitrosylation regulates dendritic growth and branching.

The protein resides in the nucleus. Its subcellular location is the cytoplasm. The catalysed reaction is N(6)-acetyl-L-lysyl-[histone] + H2O = L-lysyl-[histone] + acetate. The enzyme catalyses N(6)-acetyl-L-lysyl-[protein] + H2O = L-lysyl-[protein] + acetate. It catalyses the reaction N(6)-(2E)-butenoyl-L-lysyl-[protein] + H2O = (2E)-2-butenoate + L-lysyl-[protein]. It carries out the reaction N(6)-(2-hydroxyisobutanoyl)-L-lysyl-[protein] + H2O = 2-hydroxy-2-methylpropanoate + L-lysyl-[protein]. The catalysed reaction is N(6)-[(S)-lactoyl]-L-lysyl-[protein] + H2O = (S)-lactate + L-lysyl-[protein]. With respect to regulation, inositol tetraphosphate (1D-myo-inositol 1,4,5,6-tetrakisphosphate) may act as an intermolecular glue between HDAC2 and N-Cor repressor complex components. In terms of biological role, histone deacetylase that catalyzes the deacetylation of lysine residues on the N-terminal part of the core histones (H2A, H2B, H3 and H4). Histone deacetylation gives a tag for epigenetic repression and plays an important role in transcriptional regulation, cell cycle progression and developmental events. Histone deacetylases act via the formation of large multiprotein complexes. Forms transcriptional repressor complexes by associating with MAD, SIN3, YY1 and N-COR. Component of a RCOR/GFI/KDM1A/HDAC complex that suppresses, via histone deacetylase (HDAC) recruitment, a number of genes implicated in multilineage blood cell development. Acts as a component of the histone deacetylase NuRD complex which participates in the remodeling of chromatin. Component of the SIN3B complex that represses transcription and counteracts the histone acetyltransferase activity of EP300 through the recognition H3K27ac marks by PHF12 and the activity of the histone deacetylase HDAC2. Also deacetylates non-histone targets: deacetylates TSHZ3, thereby regulating its transcriptional repressor activity. May be involved in the transcriptional repression of circadian target genes, such as PER1, mediated by CRY1 through histone deacetylation. Involved in MTA1-mediated transcriptional corepression of TFF1 and CDKN1A. In addition to protein deacetylase activity, also acts as a protein-lysine deacylase by recognizing other acyl groups: catalyzes removal of (2E)-butenoyl (crotonyl), lactoyl (lactyl) and 2-hydroxyisobutanoyl (2-hydroxyisobutyryl) acyl groups from lysine residues, leading to protein decrotonylation, delactylation and de-2-hydroxyisobutyrylation, respectively. The polypeptide is Histone deacetylase 2 (Mus musculus (Mouse)).